We begin with the raw amino-acid sequence, 196 residues long: MSSIKLIVGLANPGAEYAQTRHNAGAWYVDLLAERHNQSLKEESKFFGYTARLNLAGQDIRLLVPATFMNLSGKAVAAMASFYRILPEEILVAHDELDILPGMAKLKLGGGNGGHNGLKDIQNKLGNNPNFYRLRIGIGHPGDKSKVTGFVLGKPPASEQTLIDNAIDESIRCTEVLLNEGMTKAMNRLHAFKASA.

Position 17 (Tyr17) interacts with tRNA. The active-site Proton acceptor is the His22. TRNA-binding residues include Phe68, Asn70, and Asn116.

It belongs to the PTH family. As to quaternary structure, monomer.

The protein resides in the cytoplasm. The catalysed reaction is an N-acyl-L-alpha-aminoacyl-tRNA + H2O = an N-acyl-L-amino acid + a tRNA + H(+). In terms of biological role, hydrolyzes ribosome-free peptidyl-tRNAs (with 1 or more amino acids incorporated), which drop off the ribosome during protein synthesis, or as a result of ribosome stalling. Functionally, catalyzes the release of premature peptidyl moieties from peptidyl-tRNA molecules trapped in stalled 50S ribosomal subunits, and thus maintains levels of free tRNAs and 50S ribosomes. The chain is Peptidyl-tRNA hydrolase from Yersinia pseudotuberculosis serotype O:1b (strain IP 31758).